A 497-amino-acid polypeptide reads, in one-letter code: Solute carrier family 2, facilitated glucose transporter member 6 (497 aa).

Residues methionine 1 to arginine 36 lie on the Cytoplasmic side of the membrane. Residues leucine 5 to leucine 6 carry the Dileucine internalization motif motif. Residues valine 37–tyrosine 57 traverse the membrane as a helical segment. The Extracellular segment spans residues threonine 58 to alanine 80. A helical transmembrane segment spans residues serine 81–leucine 101. The Cytoplasmic segment spans residues asparagine 102–alanine 115. Residues valine 116 to leucine 136 traverse the membrane as a helical segment. At glycine 137 to arginine 138 the chain is on the extracellular side. The chain crosses the membrane as a helical span at residues methionine 139–isoleucine 159. The Cytoplasmic portion of the chain corresponds to alanine 160–threonine 171. Residues proline 172–tryptophan 192 form a helical membrane-spanning segment. Glutamine 173 provides a ligand contact to a D-hexose. A topological domain (extracellular) is located at residue arginine 193. Residues tryptophan 194–proline 214 form a helical membrane-spanning segment. Topologically, residues asparagine 215–proline 273 are cytoplasmic. The helical transmembrane segment at valine 274–valine 294 threads the bilayer. Position 284–285 (glutamine 284–glutamine 285) interacts with a D-hexose. The Extracellular portion of the chain corresponds to tyrosine 295 to aspartate 312. Asparagine 302 is a glycosylation site (N-linked (GlcNAc...) asparagine). The helical transmembrane segment at alanine 313–leucine 333 threads the bilayer. Over alanine 334 to lysine 337 the chain is Cytoplasmic. Residues valine 338–valine 358 form a helical membrane-spanning segment. The Extracellular segment spans residues glutamine 359–threonine 385. Residue asparagine 368 is glycosylated (N-linked (GlcNAc...) asparagine). The helical transmembrane segment at leucine 386–isoleucine 406 threads the bilayer. Residues threonine 407–glycine 425 are Cytoplasmic-facing. Tryptophan 408 is a binding site for a D-hexose. The chain crosses the membrane as a helical span at residues leucine 426–valine 446. A topological domain (extracellular) is located at residue asparagine 447. The helical transmembrane segment at alanine 448–phenylalanine 468 threads the bilayer. Over threonine 469 to proline 497 the chain is Cytoplasmic.

The protein belongs to the major facilitator superfamily. Sugar transporter (TC 2.A.1.1) family. Mainly expressed in brain and spleen. Also expressed in lung, heart, muscle, liver, kidney, fat, whole blood, testes, ovaries and uterus.

Its subcellular location is the lysosome membrane. Its function is as follows. Probable sugar transporter that acts as a regulator of glycolysis in macrophages. Does not transport glucose. This chain is Solute carrier family 2, facilitated glucose transporter member 6, found in Mus musculus (Mouse).